A 1012-amino-acid polypeptide reads, in one-letter code: MPASAPPRRPRPPPPSLSLLLVLLGLGGRRLRAEPGDGAQTWARFSRPPAPEAAGLFQGTFPDGFLWAVGSAAYQTEGGWQQHGKGASIWDTFTHHPLAPPGDSRNASLPLGAPSPLQPATGDVASDSYNNVFRDTEALRELGVTHYRFSISWARVLPNGSAGVPNREGLRYYRRLLERLRELGVQPVVTLYHWDLPQRLQDAYGGWANRALADHFRDYAELCFRHFGGQVKYWITIDNPYVVAWHGYATGRLAPGIRGSPRLGYLVAHNLLLAHAKVWHLYNTSFRPTQGGQVSIALSSHWINPRRMTDHSIKECQKSLDFVLGWFAKPVFIDGDYPESMKNNLSSILPDFTESEKKFIKGTADFFALCFGPTLSFQLLDPHMKFRQLESPNLRQLLSWIDLEFNHPQIFIVENGWFVSGTTKRDDAKYMYYLKKFIMETLKAIKLDGVDVIGYTAWSLMDGFEWHRGYSIRRGLFYVDFLSQDKMLLPKSSALFYQKLIEKNGFPPLPENQPLEGTFPCDFAWGVVDNYIQVDTTLSQFTDLNVYLWDVHHSKRLIKVDGVVTKKRKSYCVDFAAIQPQIALLQEMHVTHFRFSLDWALILPLGNQSQVNHTILQYYRCMASELVRVNITPVVALWQPMAPNQGLPRLLARQGAWENPYTALAFAEYARLCFQELGHHVKLWITMNEPYTRNMTYSAGHNLLKAHALAWHVYNEKFRHAQNGKISIALQADWIEPACPFSQKDKEVAERVLEFDIGWLAEPIFGSGDYPWVMRDWLNQRNNFLLPYFTEDEKKLIQGTFDFLALSHYTTILVDSEKEDPIKYNDYLEVQEMTDITWLNSPSQVAVVPWGLRKVLNWLKFKYGDLPMYIISNGIDDGLHAEDDQLRVYYMQNYINEALKAHILDGINLCGYFAYSFNDRTAPRFGLYRYAADQFEPKASMKHYRKIIDSNGFPGPETLERFCPEEFTVCTECSFFHTRKSLLAFIAFLFFASIISLSLIFYYSKKGRRSYK.

The signal sequence occupies residues 1–33 (MPASAPPRRPRPPPPSLSLLLVLLGLGGRRLRA). Residues 34–981 (EPGDGAQTWA…ECSFFHTRKS (948 aa)) are Extracellular-facing. 2 glycosyl hydrolase-1 regions span residues 57-506 (FQGT…KNGF) and 515-953 (LEGT…SNGF). Asn-106, Asn-159, Asn-283, Asn-344, Asn-607, Asn-612, and Asn-694 each carry an N-linked (GlcNAc...) asparagine glycan. Residues 982–1002 (LLAFIAFLFFASIISLSLIFY) form a helical membrane-spanning segment. The Cytoplasmic portion of the chain corresponds to 1003-1012 (YSKKGRRSYK).

The protein belongs to the glycosyl hydrolase 1 family. Klotho subfamily. Homodimer. Interacts with FGF23 and FGFR1. In terms of processing, N-glycosylated. Present in cortical renal tubules (at protein level). Soluble peptide is present in serum and cerebrospinal fluid. Expressed in kidney, placenta, small intestine and prostate. Down-regulated in renal cell carcinomas, hepatocellular carcinomas, and in chronic renal failure kidney.

It is found in the cell membrane. It localises to the apical cell membrane. The protein resides in the secreted. It catalyses the reaction a beta-D-glucuronoside + H2O = D-glucuronate + an alcohol. In terms of biological role, may have weak glycosidase activity towards glucuronylated steroids. However, it lacks essential active site Glu residues at positions 239 and 872, suggesting it may be inactive as a glycosidase in vivo. May be involved in the regulation of calcium and phosphorus homeostasis by inhibiting the synthesis of active vitamin D. Essential factor for the specific interaction between FGF23 and FGFR1. Functionally, the Klotho peptide generated by cleavage of the membrane-bound isoform may be an anti-aging circulating hormone which would extend life span by inhibiting insulin/IGF1 signaling. The sequence is that of Klotho (KL) from Homo sapiens (Human).